We begin with the raw amino-acid sequence, 551 residues long: Methionine--tRNA ligase (551 aa).

The 'HIGH' region signature appears at 12 to 22 (PYANGPLHFGH). C144, C147, C157, and C160 together coordinate Zn(2+). A 'KMSKS' region motif is present at residues 330 to 334 (QFSKS). K333 serves as a coordination point for ATP.

This sequence belongs to the class-I aminoacyl-tRNA synthetase family. MetG type 1 subfamily. As to quaternary structure, monomer. Zn(2+) serves as cofactor.

The protein resides in the cytoplasm. The catalysed reaction is tRNA(Met) + L-methionine + ATP = L-methionyl-tRNA(Met) + AMP + diphosphate. Is required not only for elongation of protein synthesis but also for the initiation of all mRNA translation through initiator tRNA(fMet) aminoacylation. In Chlamydia pneumoniae (Chlamydophila pneumoniae), this protein is Methionine--tRNA ligase (metG).